Consider the following 291-residue polypeptide: Protease HtpX homolog (291 aa).

The next 2 helical transmembrane spans lie at 11–31 and 34–54; these read INTFLILFVFILACGGFGLLA and FLGMSFFLFILLLAAGYACVQ. His-140 serves as a coordination point for Zn(2+). Residue Glu-141 is part of the active site. Position 144 (His-144) interacts with Zn(2+). Transmembrane regions (helical) follow at residues 155–175 and 186–206; these read IVFGLVSAVGLISDMVLRALI and AFSFVIVLFFSLLAPIAAMLV. Glu-215 is a binding site for Zn(2+).

It belongs to the peptidase M48B family. It depends on Zn(2+) as a cofactor.

It is found in the cell membrane. This is Protease HtpX homolog from Tropheryma whipplei (strain Twist) (Whipple's bacillus).